A 577-amino-acid polypeptide reads, in one-letter code: Glucose-6-phosphate 1-dehydrogenase, chloroplastic (577 aa).

Residues 1-20 are disordered; that stretch reads MGVQLRLNPCSSSSAATSPS. The transit peptide at 1–63 directs the protein to the chloroplast; sequence MGVQLRLNPC…QPRKHFEVFS (63 aa). Residues 11 to 20 are compositionally biased toward low complexity; that stretch reads SSSSAATSPS. NADP(+) is bound by residues 97 to 104 and Arg131; that span reads GASGDLAK. Cys149 and Cys157 are disulfide-bonded. Residue Lys234 participates in NADP(+) binding. D-glucose 6-phosphate contacts are provided by residues Lys234, 264–268, Glu302, and Asp321; that span reads HYLGK. The active-site Proton acceptor is the His326. Position 419 (Lys419) interacts with NADP(+). Residues Lys422 and Lys427 each contribute to the D-glucose 6-phosphate site. Positions 428, 432, and 461 each coordinate NADP(+). Residue Gln463 participates in D-glucose 6-phosphate binding. Residues 469-471 and Arg554 each bind NADP(+); that span reads YLK.

It belongs to the glucose-6-phosphate dehydrogenase family. As to quaternary structure, homodimer. Green tissues, leaves and chloroplasts.

Its subcellular location is the plastid. The protein resides in the chloroplast. The enzyme catalyses D-glucose 6-phosphate + NADP(+) = 6-phospho-D-glucono-1,5-lactone + NADPH + H(+). It participates in carbohydrate degradation; pentose phosphate pathway; D-ribulose 5-phosphate from D-glucose 6-phosphate (oxidative stage): step 1/3. Regulated by metabolites. Post-translationally inactivated by cysteine-mediated redox modification via the ferredoxin-thioredoxin system in the light and this avoids futile cycles with photosynthetic CO2 fixation. Catalyzes the rate-limiting step of the oxidative pentose-phosphate pathway, which represents a route for the dissimilation of carbohydrates besides glycolysis. The main function of this enzyme is to provide reducing power (NADPH) and pentose phosphates for fatty acid and nucleic acid synthesis which are involved in membrane synthesis and cell division. The protein is Glucose-6-phosphate 1-dehydrogenase, chloroplastic of Solanum tuberosum (Potato).